Consider the following 941-residue polypeptide: Coiled-coil and C2 domain-containing protein 1A (941 aa).

At T91 the chain carries Phosphothreonine. 2 disordered regions span residues T183–P248 and S301–P336. The span at A228 to P239 shows a compositional bias: polar residues. S247 is modified (phosphoserine). The segment covering L303 to A318 has biased composition (pro residues). Residues K338–H384 are a coiled coil. Residues A428 to Q482 form a disordered region. S434 is modified (phosphoserine). The span at A467–G476 shows a compositional bias: low complexity. Positions K475 to V508 form a coiled coil. The C2 domain maps to R628–L762.

Belongs to the CC2D1 family. Strongly expressed in several brain areas including frontal cortex, cortex, mesencephalon, hippocampus, midbrain and hypothalamus. Also expressed in testis and at low levels in pituitary, liver and kidney. In brain the highest levels are detected in hippocampal pyramidal cells and raphe nuclei.

The protein resides in the cytoplasm. The protein localises to the nucleus. Its subcellular location is the cytoskeleton. It is found in the microtubule organizing center. It localises to the centrosome. Its function is as follows. Transcription factor that binds specifically to the DRE (dual repressor element) and represses 5-HT1A gene transcription though this element. Mediates HDAC-independent repression of HTR1A promoter. CAMK2G inhibits CC2D1a-induced repression of the HTR1A. May play a role in the altered regulation of 5-HT1A receptors associated with anxiety and major depression. Performs essential function in controlling functional maturation of synapses. The sequence is that of Coiled-coil and C2 domain-containing protein 1A (Cc2d1a) from Rattus norvegicus (Rat).